We begin with the raw amino-acid sequence, 947 residues long: Bifunctional glutamine synthetase adenylyltransferase/adenylyl-removing enzyme (947 aa).

An adenylyl removase region spans residues 1–440 (MTPLSSPLRQ…VFNELIGDDE (440 aa)). The interval 450–947 (SEPWREVWQD…ASWRKWLVAV (498 aa)) is adenylyl transferase.

This sequence belongs to the GlnE family. The cofactor is Mg(2+).

The catalysed reaction is [glutamine synthetase]-O(4)-(5'-adenylyl)-L-tyrosine + phosphate = [glutamine synthetase]-L-tyrosine + ADP. It carries out the reaction [glutamine synthetase]-L-tyrosine + ATP = [glutamine synthetase]-O(4)-(5'-adenylyl)-L-tyrosine + diphosphate. Functionally, involved in the regulation of glutamine synthetase GlnA, a key enzyme in the process to assimilate ammonia. When cellular nitrogen levels are high, the C-terminal adenylyl transferase (AT) inactivates GlnA by covalent transfer of an adenylyl group from ATP to specific tyrosine residue of GlnA, thus reducing its activity. Conversely, when nitrogen levels are low, the N-terminal adenylyl removase (AR) activates GlnA by removing the adenylyl group by phosphorolysis, increasing its activity. The regulatory region of GlnE binds the signal transduction protein PII (GlnB) which indicates the nitrogen status of the cell. The sequence is that of Bifunctional glutamine synthetase adenylyltransferase/adenylyl-removing enzyme from Salmonella arizonae (strain ATCC BAA-731 / CDC346-86 / RSK2980).